The following is a 293-amino-acid chain: Small ribosomal subunit protein uS3 (293 aa).

Residues Ile39–Lys110 form the KH type-2 domain.

It belongs to the universal ribosomal protein uS3 family. As to quaternary structure, part of the 30S ribosomal subunit. Forms a tight complex with proteins S10 and S14.

In terms of biological role, binds the lower part of the 30S subunit head. Binds mRNA in the 70S ribosome, positioning it for translation. This is Small ribosomal subunit protein uS3 from Borreliella burgdorferi (strain ATCC 35210 / DSM 4680 / CIP 102532 / B31) (Borrelia burgdorferi).